Reading from the N-terminus, the 175-residue chain is Ferritin light chain (175 aa).

An N-acetylserine modification is found at S2. The 150-residue stretch at 7-156 (QNYSTEVEAA…DHLTNLRRLA (150 aa)) folds into the Ferritin-like diiron domain. Fe cation contacts are provided by E54, E58, E61, and E64.

It belongs to the ferritin family. As to quaternary structure, oligomer of 24 subunits. There are two types of subunits: L (light) chain and H (heavy) chain. The major chain can be light or heavy, depending on the species and tissue type. The functional molecule forms a roughly spherical shell with a diameter of 12 nm and contains a central cavity into which the insoluble mineral iron core is deposited. Interacts with NCOA4.

Its subcellular location is the cytoplasmic vesicle. The protein localises to the autophagosome. The protein resides in the cytoplasm. It is found in the autolysosome. Functionally, stores iron in a soluble, non-toxic, readily available form. Important for iron homeostasis. Iron is taken up in the ferrous form and deposited as ferric hydroxides after oxidation. Also plays a role in delivery of iron to cells. Mediates iron uptake in capsule cells of the developing kidney. Delivery to lysosomes by the cargo receptor NCOA4 for autophagic degradation and release or iron. This Bos taurus (Bovine) protein is Ferritin light chain (FTL).